Reading from the N-terminus, the 297-residue chain is Rhomboid-type serine protease 2 (297 aa).

6 helical membrane-spanning segments follow: residues 14–34, 60–80, 98–118, 120–140, 155–175, and 179–199; these read IQHP…IFLL, ISFY…LVAL, IVLN…SIGF, PDEA…YWAI, LVVP…IVIP, and FIGH…YLDV. Ser-128 (nucleophile) is an active-site residue. His-182 is a catalytic residue. The segment at 268 to 297 is disordered; sequence DLEAGTRSRGNSSVDPTTSFPGTGQTLGTQ. A compositionally biased stretch (polar residues) spans 275–297; sequence SRGNSSVDPTTSFPGTGQTLGTQ.

Belongs to the peptidase S54 family.

Its subcellular location is the golgi apparatus membrane. It localises to the golgi apparatus. The protein resides in the cis-Golgi network membrane. The enzyme catalyses Cleaves type-1 transmembrane domains using a catalytic dyad composed of serine and histidine that are contributed by different transmembrane domains.. Its function is as follows. Probable rhomboid-type serine protease that catalyzes intramembrane proteolysis. This chain is Rhomboid-type serine protease 2 (RBD2), found in Yarrowia lipolytica (strain CLIB 122 / E 150) (Yeast).